The primary structure comprises 37 residues: Cytochrome b6-f complex subunit 5 (37 aa).

The chain crosses the membrane as a helical span at residues 5-25 (LLSGIVLGLIPITLLGLFVTA).

This sequence belongs to the PetG family. As to quaternary structure, the 4 large subunits of the cytochrome b6-f complex are cytochrome b6, subunit IV (17 kDa polypeptide, PetD), cytochrome f and the Rieske protein, while the 4 small subunits are PetG, PetL, PetM and PetN. The complex functions as a dimer.

Its subcellular location is the plastid. The protein localises to the chloroplast thylakoid membrane. In terms of biological role, component of the cytochrome b6-f complex, which mediates electron transfer between photosystem II (PSII) and photosystem I (PSI), cyclic electron flow around PSI, and state transitions. PetG is required for either the stability or assembly of the cytochrome b6-f complex. The protein is Cytochrome b6-f complex subunit 5 of Marchantia polymorpha (Common liverwort).